Here is a 499-residue protein sequence, read N- to C-terminus: GTPase Der (499 aa).

2 EngA-type G domains span residues 3 to 166 and 213 to 386; these read PVVA…LETL and IKFA…QSAT. GTP-binding positions include 9-16, 56-60, 118-121, 219-226, 266-270, and 331-334; these read GRPNVGKS, DTGGI, NKTD, DTAGV, and NKWD. One can recognise a KH-like domain in the interval 387–471; sequence RRTSTAMLTR…PIRVEFQESA (85 aa). The tract at residues 476–499 is disordered; it reads GRKNTMTLSQERQRKRLLKAKTKK. Positions 488-499 are enriched in basic residues; the sequence is QRKRLLKAKTKK.

The protein belongs to the TRAFAC class TrmE-Era-EngA-EngB-Septin-like GTPase superfamily. EngA (Der) GTPase family. As to quaternary structure, associates with the 50S ribosomal subunit.

Functionally, GTPase that plays an essential role in the late steps of ribosome biogenesis. This Aeromonas salmonicida (strain A449) protein is GTPase Der.